The following is a 207-amino-acid chain: Large ribosomal subunit protein uL4 (207 aa).

Residues 44 to 78 (MRQGTHKTKNRAEVSGGGRKPWRQKGTGRARQGSI) form a disordered region.

This sequence belongs to the universal ribosomal protein uL4 family. Part of the 50S ribosomal subunit.

Functionally, one of the primary rRNA binding proteins, this protein initially binds near the 5'-end of the 23S rRNA. It is important during the early stages of 50S assembly. It makes multiple contacts with different domains of the 23S rRNA in the assembled 50S subunit and ribosome. In terms of biological role, this protein when expressed in E.coli represses the endogenous S10 operon; this may not occur in B.stearothermophilus however. Its function is as follows. Forms part of the polypeptide exit tunnel. This Geobacillus stearothermophilus (Bacillus stearothermophilus) protein is Large ribosomal subunit protein uL4 (rplD).